We begin with the raw amino-acid sequence, 221 residues long: Protein FixW (221 aa).

In terms of domain architecture, Thioredoxin spans 5–156 (LNLGSPAPPI…LPKVIDGNWR (152 aa)). Residues cysteine 43 and cysteine 46 are joined by a disulfide bond.

Belongs to the thioredoxin family.

This Rhizobium leguminosarum protein is Protein FixW (fixW).